The primary structure comprises 117 residues: Glycine cleavage system H-like protein (117 aa).

Residues 21–103 (IVKLGLSSQM…ESEGWFVVLQ (83 aa)) enclose the Lipoyl-binding domain. Lysine 62 is modified (N6-lipoyllysine).

Belongs to the GcvH family. The cofactor is (R)-lipoate.

The chain is Glycine cleavage system H-like protein from Chlamydia trachomatis serovar D (strain ATCC VR-885 / DSM 19411 / UW-3/Cx).